Reading from the N-terminus, the 243-residue chain is UPF0246 protein SUB1767 (243 aa).

It belongs to the UPF0246 family.

In Streptococcus uberis (strain ATCC BAA-854 / 0140J), this protein is UPF0246 protein SUB1767.